Reading from the N-terminus, the 105-residue chain is Ig lambda-1 chain C region (105 aa).

Positions 6–100 constitute an Ig-like domain; it reads PSVTLFPPSS…EGHTVEKSLS (95 aa). C27 and C86 are joined by a disulfide.

In Mus musculus (Mouse), this protein is Ig lambda-1 chain C region.